The following is a 484-amino-acid chain: Glutamyl-tRNA(Gln) amidotransferase subunit A (484 aa).

Active-site charge relay system residues include Lys-74 and Ser-149. Catalysis depends on Ser-173, which acts as the Acyl-ester intermediate.

The protein belongs to the amidase family. GatA subfamily. As to quaternary structure, heterotrimer of A, B and C subunits.

It carries out the reaction L-glutamyl-tRNA(Gln) + L-glutamine + ATP + H2O = L-glutaminyl-tRNA(Gln) + L-glutamate + ADP + phosphate + H(+). In terms of biological role, allows the formation of correctly charged Gln-tRNA(Gln) through the transamidation of misacylated Glu-tRNA(Gln) in organisms which lack glutaminyl-tRNA synthetase. The reaction takes place in the presence of glutamine and ATP through an activated gamma-phospho-Glu-tRNA(Gln). The sequence is that of Glutamyl-tRNA(Gln) amidotransferase subunit A from Prochlorococcus marinus subsp. pastoris (strain CCMP1986 / NIES-2087 / MED4).